The sequence spans 101 residues: Small ribosomal subunit protein bS18c (101 aa).

The span at 1 to 19 (MDKSKRPFRKSKRSFRRRL) shows a compositional bias: basic residues. The tract at residues 1 to 23 (MDKSKRPFRKSKRSFRRRLPPIG) is disordered.

It belongs to the bacterial ribosomal protein bS18 family. As to quaternary structure, part of the 30S ribosomal subunit.

Its subcellular location is the plastid. The protein localises to the chloroplast. The chain is Small ribosomal subunit protein bS18c from Ceratophyllum demersum (Rigid hornwort).